The following is a 439-amino-acid chain: Exosome complex component RRP45 (439 aa).

The ARE binding stretch occupies residues 1–268; sequence MKETPLSNCE…AEITELILKA (268 aa). A Phosphoserine modification is found at serine 65. Residue lysine 297 is modified to N6-acetyllysine; alternate. Lysine 297 participates in a covalent cross-link: Glycyl lysine isopeptide (Lys-Gly) (interchain with G-Cter in SUMO1); alternate. Lysine 297 participates in a covalent cross-link: Glycyl lysine isopeptide (Lys-Gly) (interchain with G-Cter in SUMO2); alternate. A phosphoserine mark is found at serine 306, valine 325, serine 327, and serine 346. 2 disordered regions span residues 335 to 363 and 391 to 439; these read GTAQ…GGGD and LSDS…RAAN. Residues 349–361 are compositionally biased toward acidic residues; that stretch reads DLEDSEKEDDEGG. Serine 392, serine 394, lysine 409, and isoleucine 411 each carry phosphoserine. Lysine 419 is covalently cross-linked (Glycyl lysine isopeptide (Lys-Gly) (interchain with G-Cter in SUMO2)). Over residues 425 to 439 the composition is skewed to basic residues; that stretch reads SKKPVKRRKKKRAAN.

Belongs to the RNase PH family. As to quaternary structure, component of the RNA exosome core complex (Exo-9), composed of EXOSC1, EXOSC2, EXOSC3, EXOSC4, EXOSC5, EXOSC6, EXOSC7, EXOSC8 and EXOSC9; within the complex interacts with EXOSC3, EXOSC4, EXOSC5 and DIS3. The catalytically inactive RNA exosome core complex (Exo-9) associates with the catalytic subunit EXOSC10/RRP6. Exo-9 may associate with DIS3 to form the nucleolar exosome complex, or DIS3L to form the cytoplasmic exosome complex. Exo-9 is formed by a hexameric base ring consisting of the heterodimers EXOSC4-EXOSC9, EXOSC5-EXOSC8 and EXOSC6-EXOSC7, and a cap ring consisting of EXOSC1, EXOSC2 and EXOSC3. The RNA exosome complex associates with cofactors C1D/RRP47, MPHOSPH6/MPP6 and MTREX/MTR4. Interacts (via C-terminus region) with SETX (via N-terminus domain); the interaction enhances SETX sumoylation. Interacts with DIS3; the interaction is direct.

The protein resides in the cytoplasm. It is found in the nucleus. It localises to the nucleolus. The protein localises to the nucleoplasm. Non-catalytic component of the RNA exosome complex which has 3'-&gt;5' exoribonuclease activity and participates in a multitude of cellular RNA processing and degradation events. In the nucleus, the RNA exosome complex is involved in proper maturation of stable RNA species such as rRNA, snRNA and snoRNA, in the elimination of RNA processing by-products and non-coding 'pervasive' transcripts, such as antisense RNA species and promoter-upstream transcripts (PROMPTs), and of mRNAs with processing defects, thereby limiting or excluding their export to the cytoplasm. The RNA exosome may be involved in Ig class switch recombination (CSR) and/or Ig variable region somatic hypermutation (SHM) by targeting AICDA deamination activity to transcribed dsDNA substrates. In the cytoplasm, the RNA exosome complex is involved in general mRNA turnover and specifically degrades inherently unstable mRNAs containing AU-rich elements (AREs) within their 3' untranslated regions, and in RNA surveillance pathways, preventing translation of aberrant mRNAs. It seems to be involved in degradation of histone mRNA. The catalytic inactive RNA exosome core complex of 9 subunits (Exo-9) is proposed to play a pivotal role in the binding and presentation of RNA for ribonucleolysis, and to serve as a scaffold for the association with catalytic subunits and accessory proteins or complexes. EXOSC9 binds to ARE-containing RNAs. The protein is Exosome complex component RRP45 (EXOSC9) of Homo sapiens (Human).